The following is a 356-amino-acid chain: Biotin synthase (356 aa).

The Radical SAM core domain occupies 51 to 270 (NKVQCNQLLN…IALARIMMPL (220 aa)). [4Fe-4S] cluster contacts are provided by cysteine 66, cysteine 70, and cysteine 73. Residues cysteine 110, cysteine 141, cysteine 201, and arginine 274 each coordinate [2Fe-2S] cluster. The interval 310-356 (PGDNKDRSLFDRLGLEPRDDHGVHEHSSHSHTHDQGHDHGPHGHSHG) is disordered. Residues 312-350 (DNKDRSLFDRLGLEPRDDHGVHEHSSHSHTHDQGHDHGP) are compositionally biased toward basic and acidic residues.

It belongs to the radical SAM superfamily. Biotin synthase family. In terms of assembly, homodimer. Requires [4Fe-4S] cluster as cofactor. The cofactor is [2Fe-2S] cluster.

The catalysed reaction is (4R,5S)-dethiobiotin + (sulfur carrier)-SH + 2 reduced [2Fe-2S]-[ferredoxin] + 2 S-adenosyl-L-methionine = (sulfur carrier)-H + biotin + 2 5'-deoxyadenosine + 2 L-methionine + 2 oxidized [2Fe-2S]-[ferredoxin]. It participates in cofactor biosynthesis; biotin biosynthesis; biotin from 7,8-diaminononanoate: step 2/2. In terms of biological role, catalyzes the conversion of dethiobiotin (DTB) to biotin by the insertion of a sulfur atom into dethiobiotin via a radical-based mechanism. This is Biotin synthase from Rhodopseudomonas palustris (strain BisB18).